Here is a 216-residue protein sequence, read N- to C-terminus: Probable transaldolase (216 aa).

Lysine 83 acts as the Schiff-base intermediate with substrate in catalysis.

The protein belongs to the transaldolase family. Type 3B subfamily.

The protein resides in the cytoplasm. It carries out the reaction D-sedoheptulose 7-phosphate + D-glyceraldehyde 3-phosphate = D-erythrose 4-phosphate + beta-D-fructose 6-phosphate. The protein operates within carbohydrate degradation; pentose phosphate pathway; D-glyceraldehyde 3-phosphate and beta-D-fructose 6-phosphate from D-ribose 5-phosphate and D-xylulose 5-phosphate (non-oxidative stage): step 2/3. Its function is as follows. Transaldolase is important for the balance of metabolites in the pentose-phosphate pathway. The chain is Probable transaldolase from Methanococcus aeolicus (strain ATCC BAA-1280 / DSM 17508 / OCM 812 / Nankai-3).